Here is a 627-residue protein sequence, read N- to C-terminus: Alpha-terpineol synthase, chloroplastic (627 aa).

Residues 1–53 (MAGITGVMNMKLAARPSSGRHSRGCRPAVVPSAGKQMLLVRRHPPGSASWPTR) constitute a chloroplast transit peptide. The tract at residues 13 to 90 (AARPSSGRHS…EDRASRNTSS (78 aa)) is disordered. Residues R339, D376, D380, R518, and D521 each coordinate (2E)-geranyl diphosphate. The Mg(2+) site is built by D376 and D380. The DDXXD motif signature appears at 376–380 (DDTYD). Residues D521, S525, and E529 each coordinate Mg(2+).

The protein belongs to the terpene synthase family. Tpsb subfamily. Monomer. Mg(2+) serves as cofactor. The cofactor is Mn(2+). As to expression, expressed in seedling leaf sheaths and roots.

It is found in the plastid. Its subcellular location is the chloroplast. It catalyses the reaction (2E)-geranyl diphosphate + H2O = (S)-alpha-terpineol + diphosphate. The enzyme catalyses (2E)-geranyl diphosphate = (4S)-limonene + diphosphate. It carries out the reaction (2E)-geranyl diphosphate = gamma-terpinene + diphosphate. The catalysed reaction is (2E)-geranyl diphosphate = beta-myrcene + diphosphate. It catalyses the reaction (2E)-geranyl diphosphate = terpinolene + diphosphate. The enzyme catalyses (2E)-geranyl diphosphate + H2O = 4-terpineol + diphosphate. The protein operates within secondary metabolite biosynthesis; terpenoid biosynthesis. Functionally, component of the volatile terpenes biosynthesis pathways. Mediates the synthesis of a blend of monoterpenes. Converts mainly geranyl diphosphate to alpha-terpineol. Also triggers the biosynthesis of minor monoterpenes including limonene, gamma-terpinene, beta-myrcene, terpinolene and 4-terpineol. In Zea mays (Maize), this protein is Alpha-terpineol synthase, chloroplastic.